Consider the following 211-residue polypeptide: Thymidylate kinase (211 aa).

11-18 (GPDGAGKT) is a binding site for ATP.

It belongs to the thymidylate kinase family.

The enzyme catalyses dTMP + ATP = dTDP + ADP. Functionally, phosphorylation of dTMP to form dTDP in both de novo and salvage pathways of dTTP synthesis. The chain is Thymidylate kinase from Streptococcus uberis (strain ATCC BAA-854 / 0140J).